Here is a 344-residue protein sequence, read N- to C-terminus: Ferrochelatase (344 aa).

Positions 214 and 295 each coordinate Fe cation.

It belongs to the ferrochelatase family.

The protein localises to the cytoplasm. The catalysed reaction is heme b + 2 H(+) = protoporphyrin IX + Fe(2+). It functions in the pathway porphyrin-containing compound metabolism; protoheme biosynthesis; protoheme from protoporphyrin-IX: step 1/1. Catalyzes the ferrous insertion into protoporphyrin IX. This is Ferrochelatase from Rhizobium etli (strain ATCC 51251 / DSM 11541 / JCM 21823 / NBRC 15573 / CFN 42).